The sequence spans 332 residues: Ribosomal RNA small subunit methyltransferase C (332 aa).

The protein belongs to the methyltransferase superfamily. RsmC family. In terms of assembly, monomer.

It is found in the cytoplasm. The catalysed reaction is guanosine(1207) in 16S rRNA + S-adenosyl-L-methionine = N(2)-methylguanosine(1207) in 16S rRNA + S-adenosyl-L-homocysteine + H(+). In terms of biological role, specifically methylates the guanine in position 1207 of 16S rRNA in the 30S particle. This Pseudomonas putida (strain ATCC 700007 / DSM 6899 / JCM 31910 / BCRC 17059 / LMG 24140 / F1) protein is Ribosomal RNA small subunit methyltransferase C.